A 1537-amino-acid polypeptide reads, in one-letter code: Isocyanide synthase-NRPS hybrid crmA (1537 aa).

An isocyanide synthase domain region spans residues 1 to 502; sequence MFHKEAGISH…CVKAGYAALF (502 aa). The interval 351–391 is disordered; sequence PSVPVSPGMSSPSAASTSSSGASMQGSAATTPETHSPPTFT. Residues 352 to 381 are compositionally biased toward low complexity; sequence SVPVSPGMSSPSAASTSSSGASMQGSAATT. Polar residues predominate over residues 382 to 391; it reads PETHSPPTFT. The interval 573–752 is adenylation; the sequence is EAINDPFCFL…GNLIPPREDW (180 aa). The region spanning 941-1019 is the Carrier domain; sequence SSAHSIEDNV…RLSAIIALLA (79 aa). The residue at position 977 (Ser977) is an O-(pantetheine 4'-phosphoryl)serine. Residues 1293-1526 form a transferase region; sequence RCLKTTMFLV…LEMLVTDEEF (234 aa).

This sequence in the N-terminal section; belongs to the isocyanide synthase family. The protein in the C-terminal section; belongs to the NRP synthetase family.

It participates in secondary metabolite biosynthesis. Its function is as follows. Isocyanide synthase-NRPS hybrid; part of the crm gene cluster that mediates the biosynthesis of a yet unidentified copper-responsive metabolite. Converts valine into valine isocyanide that then contributes to two distinct biosynthetic pathways under copper-limiting conditions. Reaction of valine isocyanide with the imine intermediate of festuclavine results in formation of the amide bond in fumivaline A. In addition, valine isocyanide contributes to biosynthesis of a family of acylated sugar alcohols, the D-mannitol-derived fumicicolins. CrmA and associated products inhibit microbial growth from copper-starved A.fumigatus. In Aspergillus fumigatus (strain ATCC MYA-4609 / CBS 101355 / FGSC A1100 / Af293) (Neosartorya fumigata), this protein is Isocyanide synthase-NRPS hybrid crmA.